Reading from the N-terminus, the 504-residue chain is Mitochondrial-processing peptidase subunit alpha (504 aa).

Belongs to the peptidase M16 family. As to quaternary structure, heterodimer of alpha and beta subunits, forming the mitochondrial processing protease (MPP) in which subunit alpha is involved in substrate recognition and binding and subunit beta is the catalytic subunit.

Its subcellular location is the mitochondrion inner membrane. The enzyme catalyses a quinol + 2 Fe(III)-[cytochrome c](out) = a quinone + 2 Fe(II)-[cytochrome c](out) + 2 H(+)(out). In terms of biological role, substrate recognition and binding subunit of the essential mitochondrial processing protease (MPP), which cleaves the mitochondrial sequence off newly imported precursors proteins. Its function is as follows. This is a component of the ubiquinol-cytochrome c reductase complex (complex III or cytochrome b-c1 complex), which is part of the mitochondrial respiratory chain. Mediates formation of the complex between cytochromes c and c1. This chain is Mitochondrial-processing peptidase subunit alpha (MPP), found in Solanum tuberosum (Potato).